We begin with the raw amino-acid sequence, 333 residues long: Biotin synthase (333 aa).

In terms of domain architecture, Radical SAM core spans 47-276; the sequence is ADIQRASLLS…KARVRLSAGR (230 aa). 3 residues coordinate [4Fe-4S] cluster: Cys62, Cys66, and Cys69. [2Fe-2S] cluster is bound by residues Cys107, Cys139, Cys199, and Arg271.

This sequence belongs to the radical SAM superfamily. Biotin synthase family. Homodimer. [4Fe-4S] cluster is required as a cofactor. Requires [2Fe-2S] cluster as cofactor.

The catalysed reaction is (4R,5S)-dethiobiotin + (sulfur carrier)-SH + 2 reduced [2Fe-2S]-[ferredoxin] + 2 S-adenosyl-L-methionine = (sulfur carrier)-H + biotin + 2 5'-deoxyadenosine + 2 L-methionine + 2 oxidized [2Fe-2S]-[ferredoxin]. The protein operates within cofactor biosynthesis; biotin biosynthesis; biotin from 7,8-diaminononanoate: step 2/2. Functionally, catalyzes the conversion of dethiobiotin (DTB) to biotin by the insertion of a sulfur atom into dethiobiotin via a radical-based mechanism. The polypeptide is Biotin synthase (Methylobacterium nodulans (strain LMG 21967 / CNCM I-2342 / ORS 2060)).